Here is a 261-residue protein sequence, read N- to C-terminus: Non-homologous end joining protein Ku 1 (261 aa).

The region spanning 12–171 (SFSLVAIPVQ…LITLHYSDEV (160 aa)) is the Ku domain.

The protein belongs to the prokaryotic Ku family. Homodimer. Interacts with LigD.

With LigD forms a non-homologous end joining (NHEJ) DNA repair enzyme, which repairs dsDNA breaks with reduced fidelity. Binds linear dsDNA with 5'- and 3'- overhangs but not closed circular dsDNA nor ssDNA. Recruits and stimulates the ligase activity of LigD. In Geotalea uraniireducens (strain Rf4) (Geobacter uraniireducens), this protein is Non-homologous end joining protein Ku 1.